Here is a 183-residue protein sequence, read N- to C-terminus: dCTP deaminase (183 aa).

DCTP is bound by residues 106–111, 130–132, Gln151, Tyr165, and Gln175; these read KSTYAR and TLE. Glu132 functions as the Proton donor/acceptor in the catalytic mechanism.

It belongs to the dCTP deaminase family. Homotrimer.

The enzyme catalyses dCTP + H2O + H(+) = dUTP + NH4(+). Its pathway is pyrimidine metabolism; dUMP biosynthesis; dUMP from dCTP (dUTP route): step 1/2. Its function is as follows. Catalyzes the deamination of dCTP to dUTP. This is dCTP deaminase from Acidobacterium capsulatum (strain ATCC 51196 / DSM 11244 / BCRC 80197 / JCM 7670 / NBRC 15755 / NCIMB 13165 / 161).